A 258-amino-acid polypeptide reads, in one-letter code: MNGYSVFCVSDHTGLTIEAVAKSVLAQFPRIEFSLITLPFIDDAAKARAAAGRVAVTARALVFSSLTDPALRAHFKDAGLHVFDLFEHVSPAVERVLGEPATPSGGHTHGMASDYEARMDAVNFALRLDDGLSPEHLGQADLILVGVSRVGKTPTALYLALHYGLRAANYPLTPDDLANDGLPRALQPHLPRLRGLTLAPERLAAIREARLPGSRYASVAQCRSELDAAERLLAAHAIPLIDTSRMSVEEIAARLRAS.

An ADP-binding site is contributed by 146-153 (GVSRVGKT).

The protein belongs to the pyruvate, phosphate/water dikinase regulatory protein family. PSRP subfamily.

It carries out the reaction [pyruvate, water dikinase] + ADP = [pyruvate, water dikinase]-phosphate + AMP + H(+). The catalysed reaction is [pyruvate, water dikinase]-phosphate + phosphate + H(+) = [pyruvate, water dikinase] + diphosphate. Functionally, bifunctional serine/threonine kinase and phosphorylase involved in the regulation of the phosphoenolpyruvate synthase (PEPS) by catalyzing its phosphorylation/dephosphorylation. This chain is Putative phosphoenolpyruvate synthase regulatory protein, found in Thiobacillus denitrificans (strain ATCC 25259 / T1).